The chain runs to 617 residues: UvrABC system protein C (617 aa).

The GIY-YIG domain maps to 22 to 100 (KLPGVYRFFD…IKALSPKYNI (79 aa)). Positions 209-244 (DELTRTLQHKMQTAAANLQFEEAARYRDQIQALGII) constitute a UVR domain.

This sequence belongs to the UvrC family. In terms of assembly, interacts with UvrB in an incision complex.

Its subcellular location is the cytoplasm. Its function is as follows. The UvrABC repair system catalyzes the recognition and processing of DNA lesions. UvrC both incises the 5' and 3' sides of the lesion. The N-terminal half is responsible for the 3' incision and the C-terminal half is responsible for the 5' incision. The polypeptide is UvrABC system protein C (Neisseria gonorrhoeae (strain ATCC 700825 / FA 1090)).